The chain runs to 463 residues: Probable diacyglycerol O-acyltransferase tgs1 (463 aa).

Catalysis depends on H137, which acts as the Proton acceptor.

The protein belongs to the long-chain O-acyltransferase family.

The catalysed reaction is an acyl-CoA + a 1,2-diacyl-sn-glycerol = a triacyl-sn-glycerol + CoA. It participates in glycerolipid metabolism; triacylglycerol biosynthesis. Functionally, catalyzes the terminal and only committed step in triacylglycerol synthesis by using diacylglycerol and fatty acyl CoA as substrates. Required for storage lipid synthesis. In Mycobacterium tuberculosis (strain CDC 1551 / Oshkosh), this protein is Probable diacyglycerol O-acyltransferase tgs1 (tgs1).